Reading from the N-terminus, the 119-residue chain is Integration host factor subunit beta (119 aa).

The tract at residues 91 to 119 is disordered; that stretch reads DLVGNDQGDDSSNGSSDPLQSVMDMHAMH. Positions 94-107 are enriched in low complexity; sequence GNDQGDDSSNGSSD.

Belongs to the bacterial histone-like protein family. In terms of assembly, heterodimer of an alpha and a beta chain.

Functionally, this protein is one of the two subunits of integration host factor, a specific DNA-binding protein that functions in genetic recombination as well as in transcriptional and translational control. This chain is Integration host factor subunit beta, found in Bordetella parapertussis (strain 12822 / ATCC BAA-587 / NCTC 13253).